The chain runs to 359 residues: Mitochondrial glutathione transporter SLC25A39 (359 aa).

The Mitochondrial intermembrane portion of the chain corresponds to 1–14 (MDDQDPGGISPLQQ). 3 Solcar repeats span residues 9-151 (ISPL…LKAF), 159-243 (SDLY…VKSQ), and 253-347 (TSVG…GKSF). A helical membrane pass occupies residues 15 to 35 (MVASGAGAVVTSLFMTPLDVV). Residues 36–121 (KVRLQSQRPT…VKIVRHEGTR (86 aa)) lie on the Mitochondrial matrix side of the membrane. [2Fe-2S] cluster is bound by residues cysteine 74, cysteine 78, cysteine 88, and cysteine 94. Residues 122–142 (TLWSGLPATLVMTVPATAIYF) form a helical membrane-spanning segment. Over 143–164 (TAYDQLKAFLCGQSLTSDLYAP) the chain is Mitochondrial intermembrane. A helical transmembrane segment spans residues 165 to 185 (MVAGALARMGTVTVVSPLELV). Over 186–214 (RTKLQAQHVSYRELAACVQAAVAQGGWRS) the chain is Mitochondrial matrix. The helical transmembrane segment at 215–235 (LWLGWGPTALRDVPFSALYWF) threads the bilayer. Residues 236–255 (NYELVKSQLNGPRQKEQTSV) are Mitochondrial intermembrane-facing. A helical transmembrane segment spans residues 256 to 276 (GISFVAGGISGMVAATLTLPF). Topologically, residues 277–317 (DVVKTQRQMSLGAVEAMRVKPPRVDSTWLLLRRIQAESGTR) are mitochondrial matrix. Residues 318–338 (GLFAGFLPRIIKAAPSCAIMI) form a helical membrane-spanning segment. The Mitochondrial intermembrane segment spans residues 339–359 (STYEFGKSFFHRLNQEQPLGH).

The protein belongs to the mitochondrial carrier (TC 2.A.29) family. Cleaved and degraded by AFG3L2; degradation by AFG3L2 is regulated by the ability of SLC25A39 to bind iron-sulfur. In absence of mitochondrial glutathione, SLC25A39 binds iron-sulfur, preventing cleavage and degradation by AFG3L2. The presence of mitochondrial glutathione prevents iron-sulfur-binding to SLC25A39, promoting cleavage and degradation by AFG3L2.

It localises to the mitochondrion inner membrane. The catalysed reaction is glutathione(in) = glutathione(out). With respect to regulation, the activity of SLC25A39 is regulated by levels of mitochondrial glutathione via its ability to bind [2Fe-2S] iron-sulfur cluster. Upon physiological levels of mitochondrial glutathione, glutathione prevents iron-sulfur-binding to SLC25A39 promoting cleavage and degradation by AFG3L2. Upon depletion of mitochondrial glutathione, SLC25A39 binds iron-sulfur, preventing cleavage and degradation by AFG3L2. In terms of biological role, mitochondrial transporter required for glutathione import into mitochondria. Glutathione, which plays key roles in oxidative metabolism, is produced exclusively in the cytosol and is imported in many organelles. Mitochondrial glutathione is required for the activity and stability of proteins containing iron-sulfur clusters, as well as erythropoiesis. This chain is Mitochondrial glutathione transporter SLC25A39 (Slc25a39), found in Rattus norvegicus (Rat).